Reading from the N-terminus, the 198-residue chain is Transmembrane gamma-carboxyglutamic acid protein 2 (198 aa).

Residues 1–17 (MRGRPSLLLVYMGLATC) form the signal peptide. The propeptide occupies 18-51 (LDTSPHREQNQVLDIFLDAPEAQSFLVGRRRFPR). The Gla domain occupies 52–98 (ANHWDLELLTPGNLERECLEERCSWEEAREYFEDNTLTERFWESYTY). Residues 52 to 111 (ANHWDLELLTPGNLERECLEERCSWEEAREYFEDNTLTERFWESYTYNGKGGRGRVDVAG) are Extracellular-facing. The cysteines at positions 69 and 74 are disulfide-linked. Residue glutamate 72 is modified to 4-carboxyglutamate. A helical transmembrane segment spans residues 112 to 132 (LAVGLTSGILLIVLAGLGAFW). Over 133 to 198 (YLHYRRRRLR…PPYSSLRRPH (66 aa)) the chain is Cytoplasmic. The tract at residues 156-198 (PLSPQTPQSPPLPPGLPTYEQALAASGVHDAPPPPYSSLRRPH) is disordered. Residues 162 to 171 (PQSPPLPPGL) show a composition bias toward pro residues. The LPXY motif; mediates binding to WW domain-containing proteins signature appears at 171–174 (LPTY). Residues 188-191 (PPPY) carry the PPXY motif; mediates binding to WW domain-containing proteins motif.

As to quaternary structure, interacts with NEDD4. Interacts with transcriptional coactivator YAP1. Gamma-carboxyglutamate residues are formed by vitamin K dependent carboxylation. These residues are essential for the binding of calcium.

It is found in the cell membrane. This chain is Transmembrane gamma-carboxyglutamic acid protein 2 (Prrg2), found in Mus musculus (Mouse).